Here is a 705-residue protein sequence, read N- to C-terminus: Calpastatin (705 aa).

Disordered regions lie at residues Met1–Ala211 and Leu226–Pro493. Composition is skewed to basic and acidic residues over residues Lys7–Pro17 and Val24–Val62. Lys10 participates in a covalent cross-link: Glycyl lysine isopeptide (Lys-Gly) (interchain with G-Cter in SUMO2). Residue Lys28 is modified to N6-acetyllysine. Low complexity-rich tracts occupy residues Ser63 to Glu72 and Pro94 to Glu103. Position 65 is a phosphoserine (Ser65). Position 115 is a phosphothreonine (Thr115). Over residues Thr135–Lys151 the composition is skewed to acidic residues. The Inhibitory domain 1 repeat unit spans residues Glu149 to Ser202. A compositionally biased stretch (basic and acidic residues) spans Glu173–Gly194. Phosphoserine is present on residues Ser202 and Ser230. A compositionally biased stretch (basic and acidic residues) spans Asp234–Leu248. Polar residues predominate over residues Thr275 to Leu286. 2 stretches are compositionally biased toward basic and acidic residues: residues Arg289–Gly317 and Tyr327–Ser352. Residues Glu292 to Ala344 form an Inhibitory domain 2 repeat. Phosphoserine occurs at positions 352, 354, and 361. The span at Glu355 to Phe364 shows a compositional bias: acidic residues. Positions Asp365–Glu381 are enriched in basic and acidic residues. Ser428 is subject to Phosphoserine. Over residues Pro430–Glu489 the composition is skewed to basic and acidic residues. One copy of the Inhibitory domain 3 repeat lies at Ala434–Val487. A phosphoserine mark is found at Ser504 and Ser515. Positions Val527–Ser705 are disordered. The segment covering Gln533 to Ala542 has biased composition (low complexity). Ser563 is modified (phosphoserine). The Inhibitory domain 4 repeat unit spans residues Pro571–Gln624. Residues Pro571 to Arg625 show a composition bias toward basic and acidic residues. The segment covering Asp651–Asp662 has biased composition (low complexity). Positions Lys683 to Ser705 are enriched in basic and acidic residues.

The protein belongs to the protease inhibitor I27 (calpastatin) family.

Specific inhibition of calpain (calcium-dependent cysteine protease). Plays a key role in postmortem tenderization of meat and have been proposed to be involved in muscle protein degradation in living tissue. The protein is Calpastatin (CAST) of Bos taurus (Bovine).